The sequence spans 252 residues: Protein IL-40 (252 aa).

The first 18 residues, 1-18 (MALLQLLLFAMLAACGFS), serve as a signal peptide directing secretion. N82 and N177 each carry an N-linked (GlcNAc...) asparagine glycan.

Expressed in bone marrow, spleen and lymph node.

It localises to the secreted. Probable B cell-associated cytokine that plays a role in the regulation of humoral immune responses. Involved in lymphocyte B cell development and immunoglobulin/IgA production. In Mus musculus (Mouse), this protein is Protein IL-40.